Reading from the N-terminus, the 658-residue chain is Threonine--tRNA ligase (658 aa).

The TGS domain maps to 1-64 (MSNTVSLQFP…GASGKLEIIT (64 aa)). Residues 246 to 548 (DHRRLGREMD…LIENFAGHMP (303 aa)) are catalytic. The Zn(2+) site is built by C343, H394, and H525.

The protein belongs to the class-II aminoacyl-tRNA synthetase family. In terms of assembly, homodimer. Zn(2+) serves as cofactor.

It is found in the cytoplasm. The enzyme catalyses tRNA(Thr) + L-threonine + ATP = L-threonyl-tRNA(Thr) + AMP + diphosphate + H(+). Catalyzes the attachment of threonine to tRNA(Thr) in a two-step reaction: L-threonine is first activated by ATP to form Thr-AMP and then transferred to the acceptor end of tRNA(Thr). Also edits incorrectly charged L-seryl-tRNA(Thr). This Brucella abortus (strain S19) protein is Threonine--tRNA ligase.